Consider the following 110-residue polypeptide: NADH-quinone oxidoreductase subunit K (110 aa).

3 helical membrane passes run 13 to 33 (LNHYLILSSLVFTIGMFGLFM), 41 to 61 (ILMSIELMLLAVNINFVAFSI), and 73 to 93 (IIILTVAAAETSIGLAILLIY).

This sequence belongs to the complex I subunit 4L family. In terms of assembly, NDH-1 is composed of 14 different subunits. Subunits NuoA, H, J, K, L, M, N constitute the membrane sector of the complex.

Its subcellular location is the cell inner membrane. It carries out the reaction a quinone + NADH + 5 H(+)(in) = a quinol + NAD(+) + 4 H(+)(out). Its function is as follows. NDH-1 shuttles electrons from NADH, via FMN and iron-sulfur (Fe-S) centers, to quinones in the respiratory chain. The immediate electron acceptor for the enzyme in this species is believed to be ubiquinone. Couples the redox reaction to proton translocation (for every two electrons transferred, four hydrogen ions are translocated across the cytoplasmic membrane), and thus conserves the redox energy in a proton gradient. This is NADH-quinone oxidoreductase subunit K from Rickettsia conorii (strain ATCC VR-613 / Malish 7).